The following is a 679-amino-acid chain: Glycine--tRNA ligase beta subunit (679 aa).

It belongs to the class-II aminoacyl-tRNA synthetase family. As to quaternary structure, tetramer of two alpha and two beta subunits.

It localises to the cytoplasm. It carries out the reaction tRNA(Gly) + glycine + ATP = glycyl-tRNA(Gly) + AMP + diphosphate. The chain is Glycine--tRNA ligase beta subunit from Streptococcus gordonii (strain Challis / ATCC 35105 / BCRC 15272 / CH1 / DL1 / V288).